The sequence spans 99 residues: Aspartyl/glutamyl-tRNA(Asn/Gln) amidotransferase subunit C (99 aa).

Belongs to the GatC family. Heterotrimer of A, B and C subunits.

The enzyme catalyses L-glutamyl-tRNA(Gln) + L-glutamine + ATP + H2O = L-glutaminyl-tRNA(Gln) + L-glutamate + ADP + phosphate + H(+). It catalyses the reaction L-aspartyl-tRNA(Asn) + L-glutamine + ATP + H2O = L-asparaginyl-tRNA(Asn) + L-glutamate + ADP + phosphate + 2 H(+). In terms of biological role, allows the formation of correctly charged Asn-tRNA(Asn) or Gln-tRNA(Gln) through the transamidation of misacylated Asp-tRNA(Asn) or Glu-tRNA(Gln) in organisms which lack either or both of asparaginyl-tRNA or glutaminyl-tRNA synthetases. The reaction takes place in the presence of glutamine and ATP through an activated phospho-Asp-tRNA(Asn) or phospho-Glu-tRNA(Gln). This chain is Aspartyl/glutamyl-tRNA(Asn/Gln) amidotransferase subunit C, found in Mycolicibacterium smegmatis (strain ATCC 700084 / mc(2)155) (Mycobacterium smegmatis).